The following is a 450-amino-acid chain: Phosphoglucosamine mutase (450 aa).

Catalysis depends on Ser107, which acts as the Phosphoserine intermediate. Residues Ser107, Asp246, Asp248, and Asp250 each contribute to the Mg(2+) site. Phosphoserine is present on Ser107.

The protein belongs to the phosphohexose mutase family. The cofactor is Mg(2+). In terms of processing, activated by phosphorylation.

It carries out the reaction alpha-D-glucosamine 1-phosphate = D-glucosamine 6-phosphate. Catalyzes the conversion of glucosamine-6-phosphate to glucosamine-1-phosphate. In Aromatoleum aromaticum (strain DSM 19018 / LMG 30748 / EbN1) (Azoarcus sp. (strain EbN1)), this protein is Phosphoglucosamine mutase.